The sequence spans 403 residues: Phosphopentomutase (403 aa).

Asp13, Asp298, His303, Asp339, His340, and His351 together coordinate Mn(2+).

This sequence belongs to the phosphopentomutase family. The cofactor is Mn(2+).

The protein localises to the cytoplasm. It carries out the reaction 2-deoxy-alpha-D-ribose 1-phosphate = 2-deoxy-D-ribose 5-phosphate. The enzyme catalyses alpha-D-ribose 1-phosphate = D-ribose 5-phosphate. It participates in carbohydrate degradation; 2-deoxy-D-ribose 1-phosphate degradation; D-glyceraldehyde 3-phosphate and acetaldehyde from 2-deoxy-alpha-D-ribose 1-phosphate: step 1/2. Its function is as follows. Isomerase that catalyzes the conversion of deoxy-ribose 1-phosphate (dRib-1-P) and ribose 1-phosphate (Rib-1-P) to deoxy-ribose 5-phosphate (dRib-5-P) and ribose 5-phosphate (Rib-5-P), respectively. This chain is Phosphopentomutase, found in Streptococcus equi subsp. zooepidemicus (strain MGCS10565).